The sequence spans 156 residues: Glutaredoxin-2, mitochondrial (156 aa).

Residues 1-19 (MSWRRAASVGRRLVASGRI) constitute a mitochondrion transit peptide. The Glutaredoxin domain maps to 50–150 (VNQIQETISN…PLVHQCYLKK (101 aa)). Residue Cys-61 coordinates [2Fe-2S] cluster. Lys-67 is a glutathione binding site. Residue Cys-70 is modified to S-glutathionyl cysteine; alternate. The cysteines at positions 70 and 73 are disulfide-linked. Glutathione is bound by residues Gln-102 and Val-114. Position 146 (Cys-146) interacts with [2Fe-2S] cluster.

The protein belongs to the glutaredoxin family. In terms of assembly, monomer; active form. Homodimer; inactive form. The homodimer is probably linked by 1 2Fe-2S cluster. As to expression, widely expressed. Highly expressed in testis, and at much lower level in kidney and brain.

The protein localises to the mitochondrion. Its subcellular location is the nucleus. Its activity is regulated as follows. The 2Fe-2S present in the homodimer leads to inactivation of the enzyme. The 2Fe-2S may serve as a redox sensor: the presence of one-electron oxidants or reductants leading to the loss of the 2Fe-2S cluster, subsequent monomerization and activation of the enzyme. Glutathione-dependent oxidoreductase that facilitates the maintenance of mitochondrial redox homeostasis upon induction of apoptosis by oxidative stress. Involved in response to hydrogen peroxide and regulation of apoptosis caused by oxidative stress. Acts as a very efficient catalyst of monothiol reactions because of its high affinity for protein glutathione-mixed disulfides. Can receive electrons not only from glutathione (GSH), but also from thioredoxin reductase supporting both monothiol and dithiol reactions. Efficiently catalyzes both glutathionylation and deglutathionylation of mitochondrial complex I, which in turn regulates the superoxide production by the complex. Overexpression decreases the susceptibility to apoptosis and prevents loss of cardiolipin and cytochrome c release. In Mus musculus (Mouse), this protein is Glutaredoxin-2, mitochondrial (Glrx2).